A 1702-amino-acid chain; its full sequence is MILDTDYITKDGKPIIRIFKKENGEFKIELDPHFQPYIYALLKDDSAIEEIKAIKGERHGKTVRVLDAVKVRKKFLGREVEVWKLIFEHPQDVPAMRGKIREHPAVVDIYEYDIPFAKRYLIDKGLIPMEGDEELKLLAFDIETFYHEGDEFGKGEIIMISYADEEEARVITWKNIDLPYVDVVSNEREMIKRFVQVVKEKDPDVIITYNGDNFDLPYLIKRAEKLGVRLVLGRDKEHPEPKIQRMGDSFAVEIKGRIHFDLFPVVRRTINLPTYTLEAVYEAVLGKTKSKLGAEEIAAIWETEESMKKLAQYSMEDARATYELGKEFFPMEAELAKLIGQSVWDVSRSSTGNLVEWYLLRVAYARNELAPNKPDEEEYKRRLRTTYLGGYVKEPEKGLWENIIYLDFRSLYPSIIVTHNVSPDTLEKEGCKNYDVAPIVGYRFCKDFPGFIPSILGDLIAMRQDIKKKMKSTIDPIEKKMLDYRQRAIKLLANSILPNEWLPIIENGEIKFVKIGEFINSYMEKQKENVKTVENTEVLEVNNLFAFSFNKKIKESEVKKVKALIRHKYKGKAYEIQLSSGRKINITAGHSLFTVRNGEIKEVSGDGIKEGDLIVAPKKIKLNEKGVSINIPELISDLSEEETADIVMTISAKGRKNFFKGMLRTLRWMFGEENRRIRTFNRYLFHLEKLGLIKLLPRGYEVTDWERLKKYKQLYEKLAGSVKYNGNKREYLVMFNEIKDFISYFPQKELEEWKIGTLNGFRTNCILKVDEDFGKLLGYYVSEGYAGAQKNKTGGISYSVKLYNEDPNVLESMKNVAEKFFGKVRVDRNCVSISKKMAYLVMKCLCGALAENKRIPSVILTSPEPVRWSFLEAYFTGDGDIHPSKRFRLSTKSELLANQLVFLLNSLGISSVKIGFDSGVYRVYINEDLQFPQTSREKNTYYSNLIPKEILRDVFGKEFQKNMTFKKFKELVDSGKLNREKAKLLEFFINGDIVLDRVKSVKEKDYEGYVYDLSVEDNENFLVGFGLLYAHNSYYGYMGYPKARWYSKECAESVTAWGRHYIEMTIREIEEKFGFKVLYADSVSGESEIIIRQNGKIRFVKIKDLFSKVDYSIGEKEYCILEGVEALTLDDDGKLVWKPVPYVMRHRANKRMFRIWLTNSWYIDVTEDHSLIGYLNTSKTKTAKKIGERLKEVKPFELGKAVKSLICPNAPLKDENTKTSEIAVKFWELVGLIVGDGNWGGDSRWAEYYLGLSTGKDAEEIKQKLLEPLKTYGVISNYYPKNEKGDFNILAKSLVKFMKRHFKDEKGRRKIPEFMYELPVTYIEAFLRGLFSADGTVTIRKGVPEIRLTNIDADFLREVRKLLWIVGISNSIFAETTPNRYNGVSTGTYSKHLRIKNKWRFAERIGFLIERKQKRLLEHLKSARVKRNTIDFGFDLVHVKKVEEIPYEGYVYDIEVEETHRFFANNILVHNTDGFYATIPGEKPELIKKKAKEFLNYINSKLPGLLELEYEGFYLRGFFVTKKRYAVIDEEGRITTRGLEVVRRDWSEIAKETQAKVLEAILKEGSVEKAVEVVRDVVEKIAKYRVPLEKLVIHEQITRDLKDYKAIGPHVAIAKRLAARGIKVKPGTIISYIVLKGSGKISDRVILLTEYDPRKHKYDPDYYIENQVLPAVLRILEAFGYRKEDLRYQSSKQTGLDAWLKR.

2 DOD-type homing endonuclease domains span residues 776–909 and 1229–1368; these read LLGY…SLGI and LVGL…IVGI.

The protein belongs to the DNA polymerase type-B family. In terms of processing, this protein undergoes a protein self splicing that involves a post-translational excision of the two intervening regions (inteins) followed by peptide ligation.

It carries out the reaction DNA(n) + a 2'-deoxyribonucleoside 5'-triphosphate = DNA(n+1) + diphosphate. In terms of biological role, in addition to polymerase activity, this DNA polymerase exhibits 3' to 5' exonuclease activity. Intein encoded endonucleases are thought to mediate intein mobility by site-specific recombination initiated by endonuclease cleavage at the 'homing site' in gene that lack the intein. This Thermococcus litoralis protein is DNA polymerase (pol).